A 117-amino-acid polypeptide reads, in one-letter code: Immunoglobulin kappa variable 1-33 (117 aa).

A signal peptide spans 1–22; sequence MDMRVPAQLLGLLLLWLSGARC. The segment at 23-45 is framework-1; it reads DIQMTQSPSSLSASVGDRVTITC. Positions 24-117 constitute an Ig-like domain; it reads IQMTQSPSSL…YYCQQYDNLP (94 aa). A disulfide bond links cysteine 45 and cysteine 110. The complementarity-determining-1 stretch occupies residues 46-56; it reads QASQDISNYLN. The interval 57 to 71 is framework-2; the sequence is WYQQKPGKAPKLLIY. Residues 72 to 78 form a complementarity-determining-2 region; sequence DASNLET. The tract at residues 79–110 is framework-3; the sequence is GVPSRFSGSGSGTDFTFTISSLQPEDIATYYC. Residues 111-117 are complementarity-determining-3; sequence QQYDNLP.

In terms of assembly, immunoglobulins are composed of two identical heavy chains and two identical light chains; disulfide-linked.

The protein resides in the secreted. Its subcellular location is the cell membrane. Its function is as follows. V region of the variable domain of immunoglobulin light chains that participates in the antigen recognition. Immunoglobulins, also known as antibodies, are membrane-bound or secreted glycoproteins produced by B lymphocytes. In the recognition phase of humoral immunity, the membrane-bound immunoglobulins serve as receptors which, upon binding of a specific antigen, trigger the clonal expansion and differentiation of B lymphocytes into immunoglobulins-secreting plasma cells. Secreted immunoglobulins mediate the effector phase of humoral immunity, which results in the elimination of bound antigens. The antigen binding site is formed by the variable domain of one heavy chain, together with that of its associated light chain. Thus, each immunoglobulin has two antigen binding sites with remarkable affinity for a particular antigen. The variable domains are assembled by a process called V-(D)-J rearrangement and can then be subjected to somatic hypermutations which, after exposure to antigen and selection, allow affinity maturation for a particular antigen. This is Immunoglobulin kappa variable 1-33 from Homo sapiens (Human).